A 151-amino-acid chain; its full sequence is Putative pre-16S rRNA nuclease (151 aa).

Belongs to the YqgF nuclease family.

It localises to the cytoplasm. Functionally, could be a nuclease involved in processing of the 5'-end of pre-16S rRNA. The polypeptide is Putative pre-16S rRNA nuclease (Methylococcus capsulatus (strain ATCC 33009 / NCIMB 11132 / Bath)).